The primary structure comprises 620 residues: Glutathione-regulated potassium-efflux system protein KefC (620 aa).

The next 12 helical transmembrane spans lie at 4–24 (HTLI…PIAV), 26–46 (LGLG…PWGL), 54–74 (SILH…GLEL), 90–110 (GALQ…LLGL), 114–134 (VAEL…MQAM), 149–169 (FAVL…IPLL), 178–198 (MGAF…VVLL), 218–238 (VFSA…EEVG), 270–290 (GLLL…GTLL), 294–314 (LRIV…LWLI), 327–347 (WFAV…GAAQ), and 359–379 (SLTL…VILN). In terms of domain architecture, RCK N-terminal spans 399–518 (QPRVIIAGFG…AGVEKPERET (120 aa)). The disordered stretch occupies residues 597-620 (GWQGTEEGKHTGNMADEPETKPSS).

The protein belongs to the monovalent cation:proton antiporter 2 (CPA2) transporter (TC 2.A.37) family. KefC subfamily. As to quaternary structure, homodimer. Interacts with the regulatory subunit KefF.

It localises to the cell inner membrane. In terms of biological role, pore-forming subunit of a potassium efflux system that confers protection against electrophiles. Catalyzes K(+)/H(+) antiport. The chain is Glutathione-regulated potassium-efflux system protein KefC from Escherichia coli O127:H6 (strain E2348/69 / EPEC).